Here is a 426-residue protein sequence, read N- to C-terminus: Eukaryotic translation initiation factor 3 subunit M (426 aa).

Positions 179–350 (DDEDSYRYLI…KVFLVHRTTY (172 aa)) constitute a PCI domain. The segment covering 385–401 (DVEGQREREQQELERKL) has biased composition (basic and acidic residues). The segment at 385-426 (DVEGQREREQQELERKLAGAGMGGGPGGDRRRQQKPRTDEDD) is disordered.

The protein belongs to the eIF-3 subunit M family. Component of the eukaryotic translation initiation factor 3 (eIF-3) complex.

It is found in the cytoplasm. Functionally, component of the eukaryotic translation initiation factor 3 (eIF-3) complex, which is involved in protein synthesis of a specialized repertoire of mRNAs and, together with other initiation factors, stimulates binding of mRNA and methionyl-tRNAi to the 40S ribosome. The eIF-3 complex specifically targets and initiates translation of a subset of mRNAs involved in cell proliferation. This is Eukaryotic translation initiation factor 3 subunit M from Chaetomium globosum (strain ATCC 6205 / CBS 148.51 / DSM 1962 / NBRC 6347 / NRRL 1970) (Soil fungus).